The chain runs to 472 residues: Glutamate--tRNA ligase (472 aa).

The short motif at 10-20 (PSPTGYLHVGG) is the 'HIGH' region element. The Zn(2+) site is built by Cys-99, Cys-101, Cys-126, and His-128. The short motif at 238 to 242 (KLSKR) is the 'KMSKS' region element. Lys-241 is an ATP binding site.

Belongs to the class-I aminoacyl-tRNA synthetase family. Glutamate--tRNA ligase type 1 subfamily. Monomer. It depends on Zn(2+) as a cofactor.

It localises to the cytoplasm. The enzyme catalyses tRNA(Glu) + L-glutamate + ATP = L-glutamyl-tRNA(Glu) + AMP + diphosphate. In terms of biological role, catalyzes the attachment of glutamate to tRNA(Glu) in a two-step reaction: glutamate is first activated by ATP to form Glu-AMP and then transferred to the acceptor end of tRNA(Glu). The chain is Glutamate--tRNA ligase from Proteus mirabilis (strain HI4320).